The sequence spans 660 residues: tRNA 5-methylaminomethyl-2-thiouridine biosynthesis bifunctional protein MnmC (660 aa).

Positions 1-241 (MNDHPAQDAF…KREILRGHLQ (241 aa)) are tRNA (mnm(5)s(2)U34)-methyltransferase. The segment at 268-660 (IGAGLAGCAT…FLLRKLIRGT (393 aa)) is FAD-dependent cmnm(5)s(2)U34 oxidoreductase.

The protein in the N-terminal section; belongs to the methyltransferase superfamily. tRNA (mnm(5)s(2)U34)-methyltransferase family. This sequence in the C-terminal section; belongs to the DAO family. FAD is required as a cofactor.

The protein localises to the cytoplasm. It catalyses the reaction 5-aminomethyl-2-thiouridine(34) in tRNA + S-adenosyl-L-methionine = 5-methylaminomethyl-2-thiouridine(34) in tRNA + S-adenosyl-L-homocysteine + H(+). In terms of biological role, catalyzes the last two steps in the biosynthesis of 5-methylaminomethyl-2-thiouridine (mnm(5)s(2)U) at the wobble position (U34) in tRNA. Catalyzes the FAD-dependent demodification of cmnm(5)s(2)U34 to nm(5)s(2)U34, followed by the transfer of a methyl group from S-adenosyl-L-methionine to nm(5)s(2)U34, to form mnm(5)s(2)U34. This is tRNA 5-methylaminomethyl-2-thiouridine biosynthesis bifunctional protein MnmC from Stutzerimonas stutzeri (strain A1501) (Pseudomonas stutzeri).